Consider the following 489-residue polypeptide: N-succinylglutamate 5-semialdehyde dehydrogenase (489 aa).

NAD(+) is bound at residue 223–228; that stretch reads GSSRTG. Residues Glu246 and Cys280 contribute to the active site.

This sequence belongs to the aldehyde dehydrogenase family. AstD subfamily.

It carries out the reaction N-succinyl-L-glutamate 5-semialdehyde + NAD(+) + H2O = N-succinyl-L-glutamate + NADH + 2 H(+). It functions in the pathway amino-acid degradation; L-arginine degradation via AST pathway; L-glutamate and succinate from L-arginine: step 4/5. Functionally, catalyzes the NAD-dependent reduction of succinylglutamate semialdehyde into succinylglutamate. In Aeromonas salmonicida (strain A449), this protein is N-succinylglutamate 5-semialdehyde dehydrogenase.